The following is a 1026-amino-acid chain: Multidrug resistance protein MdtC (1026 aa).

At 1 to 6 (MRFFAL) the chain is on the cytoplasmic side. The chain crosses the membrane as a helical span at residues 7–29 (FIYRPVATILIAAAITLCGILGF). At 30-335 (RLLPVAPLPQ…TIRASLQEVE (306 aa)) the chain is on the periplasmic side. A helical transmembrane segment spans residues 336–353 (ETLAISVALVILVVFLFL). Residues 354-359 (RSGRAT) lie on the Cytoplasmic side of the membrane. Residues 360–379 (LIPAVAVPVSLIGTFAAMYL) form a helical membrane-spanning segment. Over 380–388 (CGFSLNNLS) the chain is Periplasmic. Residues 389-411 (LMALTIATGFVVDDAIVVLENIA) form a helical membrane-spanning segment. The Cytoplasmic segment spans residues 412–430 (RHLEAGMKPLQAALQGTRE). A helical membrane pass occupies residues 431–453 (VGFTVISMSLSLVAVFLPLLLMG). The Periplasmic portion of the chain corresponds to 454–467 (GLPGRLLREFAVTL). The chain crosses the membrane as a helical span at residues 468 to 490 (SVAIGISLVVSLTLTPMMCGWML). The Cytoplasmic portion of the chain corresponds to 491–852 (KSSKPRTQPR…QVFQQTMNSQ (362 aa)). Residues 853-875 (LILIVAAIATVYIVLGILYESYV) form a helical membrane-spanning segment. At 876–894 (HPLTILSTLPSAGVGALLA) the chain is on the periplasmic side. Residues 895–917 (LELFNAPFSLIALIGIMLLIGIV) form a helical membrane-spanning segment. Over 918 to 947 (KKNAIMMVDFALEAQRSGGLTPEQAIFQAC) the chain is Cytoplasmic. The chain crosses the membrane as a helical span at residues 948-970 (LLRFRPIMMTTLAALFGALPLVL). At 971-984 (SGGDGSELRQPLGI) the chain is on the periplasmic side. Residues 985-1007 (TIVGGLVMSQLLTLYTTPVVYLF) form a helical membrane-spanning segment. The Cytoplasmic segment spans residues 1008-1026 (FDRLRLRFSRKNSKPVVEI).

It belongs to the resistance-nodulation-cell division (RND) (TC 2.A.6) family. MdtC subfamily. As to quaternary structure, part of a tripartite efflux system composed of MdtA, MdtB and MdtC. MdtC forms a heteromultimer with MdtB.

It localises to the cell inner membrane. This is Multidrug resistance protein MdtC from Salmonella typhimurium (strain LT2 / SGSC1412 / ATCC 700720).